A 603-amino-acid polypeptide reads, in one-letter code: NAD 5'-nucleotidase (603 aa).

The N-terminal stretch at 1-25 (MLLSKKSASFALSAFAMLFTSVALA) is a signal peptide. Positions 44, 46, 94, 126, and 227 each coordinate Zn(2+). Residues Arg-397, Arg-437, Phe-456, and 540 to 546 (YVAGGKD) each bind substrate.

Belongs to the 5'-nucleotidase family. Zn(2+) is required as a cofactor.

Its subcellular location is the periplasm. It carries out the reaction a ribonucleoside 5'-phosphate + H2O = a ribonucleoside + phosphate. Its function is as follows. Degrades NAD into adenosine and nicotinamide riboside, the latter being subsequently internalized by a specific permease. Also endowed with NAD(P) pyrophosphatase activity. Exhibits a broad substrate specificity, recognizing either mono- or dinucleotide nicotinamides and different adenosine phosphates with a maximal activity on 5'-adenosine monophosphate. In Haemophilus influenzae (strain ATCC 51907 / DSM 11121 / KW20 / Rd), this protein is NAD 5'-nucleotidase.